The sequence spans 550 residues: Amino acid transporter AVT1D (550 aa).

A compositionally biased stretch (basic and acidic residues) spans 1 to 16; sequence MKLDEEFLHDRDHSFL. The interval 1–99 is disordered; that stretch reads MKLDEEFLHD…FMPQSSSRRL (99 aa). Over residues 84-99 the composition is skewed to polar residues; that stretch reads TPPSVSFMPQSSSRRL. A run of 11 helical transmembrane segments spans residues 164 to 184, 189 to 209, 236 to 256, 264 to 286, 308 to 328, 345 to 365, 375 to 395, 424 to 444, 459 to 479, 481 to 501, and 521 to 541; these read SVLN…PYAI, WLGL…GVLM, FIIS…YIIM, LFPN…IFAI, SVGG…VGAV, LPVT…FPNI, FPLV…AVAV, VWTA…PIVM, GVSI…ALSV, FFAI…ALIF, and LCIF…YSAI.

This sequence belongs to the amino acid/polyamine transporter 2 family. Amino acid/auxin permease (AAAP) (TC 2.A.18.5) subfamily.

It localises to the membrane. This chain is Amino acid transporter AVT1D, found in Arabidopsis thaliana (Mouse-ear cress).